The primary structure comprises 257 residues: MDVLLTNDDGIDAVGIRALYDALAEVADVTAVAPADDQSAVGRQLSRTVELHDHELGYAVEGTPADCVIAGLGALDLDPDIVVAGCNEGANLGEYVLGRSGTVSAAVEAAFFGVPAIAASVYFPAGDVTIEEFDPDKTDFAEASRAVRYLVDNAIGAGVFDAADYLNVNAPLPPETGHAPMEITEPSHVYEMDGERDGETVRIQDHIWERMAEGTIPDPPGTDRRAVVEGRVSVSPLTAPHPTTGHEGLAGLAEKYQ.

A divalent metal cation contacts are provided by aspartate 8, aspartate 9, serine 39, and asparagine 87. The interval 234 to 257 (VSPLTAPHPTTGHEGLAGLAEKYQ) is disordered.

The protein belongs to the SurE nucleotidase family. A divalent metal cation is required as a cofactor.

It localises to the cytoplasm. The catalysed reaction is a ribonucleoside 5'-phosphate + H2O = a ribonucleoside + phosphate. Nucleotidase that shows phosphatase activity on nucleoside 5'-monophosphates. The polypeptide is 5'-nucleotidase SurE (Natronomonas pharaonis (strain ATCC 35678 / DSM 2160 / CIP 103997 / JCM 8858 / NBRC 14720 / NCIMB 2260 / Gabara) (Halobacterium pharaonis)).